Here is a 122-residue protein sequence, read N- to C-terminus: Double-headed protease inhibitor, submandibular gland (122 aa).

2 Kazal-like domains span residues 10–70 (GGRK…KCDI) and 71–121 (ECPQ…QCQS). Disulfide bonds link Cys-16–Cys-50, Cys-28–Cys-47, Cys-36–Cys-68, Cys-72–Cys-101, Cys-79–Cys-98, and Cys-87–Cys-119.

It is found in the secreted. In terms of biological role, this inhibitor is composed of two homologous actively inhibiting halves: one which inhibits trypsin, the other which inhibits elastase. In Mustela lutreola (European mink), this protein is Double-headed protease inhibitor, submandibular gland.